The primary structure comprises 338 residues: MQIFYISSPDNQKIYVWKLDNHQEKLELMQVVSTDGCAQPTVVHPNQNFLYVGIRPDFKIDTYRISQNGLLTKIQSTKICDSPTYLTINIYGTFIYCVSYNFNCINVIKIDKFGLLCNSIQIIKNMLGCHSANINKDRKVLWAPCLQENTIRLFDIDHLYGTLKPHNPHVINTNMQSGPRHMAFHSTDNYAYVINEYNGVIDVIQYNDSITNLAIIQKINILSNHGLDTKKFWSSDIHITPNNRWLYCADRFCNTISLFEILLNTKKLKFINYIYTEDQPRGFLIDSTGNFLIVAGQKSHFITLYRIHANNGNLSVISRHASGMGPMWISILSKNTIH.

This sequence belongs to the cycloisomerase 2 family.

It catalyses the reaction 6-phospho-D-glucono-1,5-lactone + H2O = 6-phospho-D-gluconate + H(+). It participates in carbohydrate degradation; pentose phosphate pathway; D-ribulose 5-phosphate from D-glucose 6-phosphate (oxidative stage): step 2/3. Its function is as follows. Catalyzes the hydrolysis of 6-phosphogluconolactone to 6-phosphogluconate. In Blochmanniella floridana, this protein is 6-phosphogluconolactonase.